Reading from the N-terminus, the 300-residue chain is Non-secreted LysM effector LysM16 (300 aa).

The LysM domain maps to 176–222 (EWHTVFSGDTCQLIEAEYGITLEKFIALNTYVNSTCGNIWPDYAYCV).

This sequence belongs to the secreted LysM effector family.

Non-secreted LysM effector that might be involved in manipulation of host defenses for successful infection. The polypeptide is Non-secreted LysM effector LysM16 (Penicillium expansum (Blue mold rot fungus)).